A 486-amino-acid polypeptide reads, in one-letter code: UDP-N-acetylmuramoyl-L-alanyl-D-glutamate--2,6-diaminopimelate ligase (486 aa).

UDP-N-acetyl-alpha-D-muramoyl-L-alanyl-D-glutamate is bound at residue Ser-31. 109-115 (GTNGKTT) lines the ATP pocket. Residues Asn-150, 151-152 (TT), Ser-178, and Arg-186 contribute to the UDP-N-acetyl-alpha-D-muramoyl-L-alanyl-D-glutamate site. Lys-218 is modified (N6-carboxylysine). Meso-2,6-diaminopimelate is bound by residues Arg-381, 405 to 408 (DNPR), Gly-455, and Glu-459. Positions 405-408 (DNPR) match the Meso-diaminopimelate recognition motif motif.

This sequence belongs to the MurCDEF family. MurE subfamily. It depends on Mg(2+) as a cofactor. Post-translationally, carboxylation is probably crucial for Mg(2+) binding and, consequently, for the gamma-phosphate positioning of ATP.

The protein resides in the cytoplasm. It catalyses the reaction UDP-N-acetyl-alpha-D-muramoyl-L-alanyl-D-glutamate + meso-2,6-diaminopimelate + ATP = UDP-N-acetyl-alpha-D-muramoyl-L-alanyl-gamma-D-glutamyl-meso-2,6-diaminopimelate + ADP + phosphate + H(+). It participates in cell wall biogenesis; peptidoglycan biosynthesis. Functionally, catalyzes the addition of meso-diaminopimelic acid to the nucleotide precursor UDP-N-acetylmuramoyl-L-alanyl-D-glutamate (UMAG) in the biosynthesis of bacterial cell-wall peptidoglycan. The protein is UDP-N-acetylmuramoyl-L-alanyl-D-glutamate--2,6-diaminopimelate ligase of Halalkalibacterium halodurans (strain ATCC BAA-125 / DSM 18197 / FERM 7344 / JCM 9153 / C-125) (Bacillus halodurans).